The primary structure comprises 127 residues: Phosphoribosyl-AMP cyclohydrolase (127 aa).

A Mg(2+)-binding site is contributed by aspartate 83. Cysteine 84 lines the Zn(2+) pocket. Mg(2+) is bound by residues aspartate 85 and aspartate 87. Positions 100 and 107 each coordinate Zn(2+).

It belongs to the PRA-CH family. Homodimer. Mg(2+) is required as a cofactor. It depends on Zn(2+) as a cofactor.

It is found in the cytoplasm. The catalysed reaction is 1-(5-phospho-beta-D-ribosyl)-5'-AMP + H2O = 1-(5-phospho-beta-D-ribosyl)-5-[(5-phospho-beta-D-ribosylamino)methylideneamino]imidazole-4-carboxamide. The protein operates within amino-acid biosynthesis; L-histidine biosynthesis; L-histidine from 5-phospho-alpha-D-ribose 1-diphosphate: step 3/9. In terms of biological role, catalyzes the hydrolysis of the adenine ring of phosphoribosyl-AMP. The chain is Phosphoribosyl-AMP cyclohydrolase from Methanocaldococcus jannaschii (strain ATCC 43067 / DSM 2661 / JAL-1 / JCM 10045 / NBRC 100440) (Methanococcus jannaschii).